An 864-amino-acid polypeptide reads, in one-letter code: Ribosome biogenesis protein ERB1 (864 aa).

Over residues 1 to 52 (MAVDKGRRPVPPERRAQGRKRAEPGDVTIRETRTRPVHTPEPEPELLAKDGI) the composition is skewed to basic and acidic residues. Disordered regions lie at residues 1-153 (MAVD…VKEG) and 191-231 (ESRN…STED). A compositionally biased stretch (acidic residues) spans 53–71 (LELEDDDDNDDDDDDDDDD). The segment covering 72 to 83 (KSNHHDGAPKNE) has biased composition (basic and acidic residues). The span at 100 to 135 (DDGDEDEEEDDEDEDEDASDDEAFDSDDLENWDEEA) shows a compositional bias: acidic residues. WD repeat units lie at residues 509-549 (AHAP…CVAT), 559-599 (ADRS…KTMY), 694-732 (NSAM…LVKT), 735-774 (PGVR…RPYK), 778-817 (YHSR…DLLQ), and 833-864 (QDAL…LWTP).

Belongs to the WD repeat BOP1/ERB1 family. In terms of assembly, component of the NOP7 complex, composed of ERB1, NOP7 and YTM1. The complex is held together by ERB1, which interacts with NOP7 via its N-terminal domain and with YTM1 via a high-affinity interaction between the seven-bladed beta-propeller domains of the 2 proteins. The NOP7 complex associates with the 66S pre-ribosome.

Its subcellular location is the nucleus. The protein resides in the nucleolus. It is found in the nucleoplasm. Its function is as follows. Component of the NOP7 complex, which is required for maturation of the 25S and 5.8S ribosomal RNAs and formation of the 60S ribosome. This is Ribosome biogenesis protein ERB1 from Malassezia globosa (strain ATCC MYA-4612 / CBS 7966) (Dandruff-associated fungus).